The chain runs to 647 residues: Transcriptional repressor XBP1 (647 aa).

2 stretches are compositionally biased toward polar residues: residues 138 to 148 (SNKTPVSASPT) and 156 to 170 (STASRENATSSLTKN). 2 disordered regions span residues 138-170 (SNKTPVSASPTKQEKKALSTASRENATSSLTKN) and 264-295 (LLSSSTSSPPKRRTSTGSTFLDANASSSSTSS). The segment covering 264–282 (LLSSSTSSPPKRRTSTGST) has biased composition (low complexity). Residues 282–395 (TFLDANASSS…PDFPKDCESW (114 aa)) enclose the HTH APSES-type domain. The segment at residues 318–339 (CQSYKDFLINELGPDQIDLPNL) is a DNA-binding region (H-T-H motif). The segment covering 425–434 (TNFTSTAVAR) has biased composition (low complexity). Disordered stretches follow at residues 425-455 (TNFTSTAVARPRQKPRPRPRQRSTSMSHSKA), 485-508 (KKNSKRQKSSTYTSQTSSPIGPRD), and 612-647 (QNQRPAHNTNTNMDTSFSPRANNSLNNFKFKTNSKQ). A compositionally biased stretch (basic residues) spans 435-445 (PRQKPRPRPRQ). Over residues 493 to 502 (SSTYTSQTSS) the composition is skewed to low complexity.

The protein resides in the nucleus. Transcriptional repressor which binds to the consensus sequence 5'-GCCTCGA[G/A]G[C/A]-3'. Represses CLN1 transcription. In Saccharomyces cerevisiae (strain ATCC 204508 / S288c) (Baker's yeast), this protein is Transcriptional repressor XBP1 (XBP1).